A 123-amino-acid chain; its full sequence is UPF0102 protein SPO0400 (123 aa).

It belongs to the UPF0102 family.

The protein is UPF0102 protein SPO0400 of Ruegeria pomeroyi (strain ATCC 700808 / DSM 15171 / DSS-3) (Silicibacter pomeroyi).